The sequence spans 556 residues: Melanoma-associated antigen B4 (556 aa).

A compositionally biased stretch (basic residues) spans 1–15 (MPRGQKSKARAREKR). Residues 1 to 110 (MPRGQKSKAR…RFSENPQNDL (110 aa)) form a disordered region. The span at 39–73 (PSCSNQDSGDAVASTSTAGFPQKSKSQGEAPTTTA) shows a compositional bias: polar residues. Positions 77 to 87 (GACRRSRKSTR) are enriched in basic residues. The MAGE domain maps to 111–310 (LTRKTGMLMQ…QAFPTHYEEA (200 aa)). Positions 315–335 (EERAQAEAVGSPGTSAKDKAE) are disordered. A Phosphoserine modification is found at Ser-325. 15 consecutive repeat copies span residues 334–348 (AEAK…CKYQ), 349–363 (AESK…CKDQ), 364–378 (AESK…CKDN), 379–392 (AKSK…RKYK), 393–407 (AKSK…CKDQ), 408–421 (AESK…CKDQ), 422–436 (AESK…CKDQ), 437–451 (AESK…CKDQ), 452–466 (AESK…CKDK), 467–480 (AKSK…HKYK), 481–495 (AKSK…CKDQ), 496–510 (AESK…CKDQ), 511–525 (AESK…CKDN), 526–539 (AKSK…RKYK), and 540–554 (AKSK…GKDK). The tract at residues 334-554 (AEAKVTLVDS…PLVDSSGKDK (221 aa)) is 15 X 15 AA approximate tandem repeats.

Expressed in testis (at protein level).

The protein localises to the cytoplasm. The chain is Melanoma-associated antigen B4 from Mus musculus (Mouse).